Reading from the N-terminus, the 361-residue chain is Carbamoyl phosphate synthase small chain (361 aa).

Positions 1–173 (MRAALALEDG…SVREEYRFSD (173 aa)) are CPSase. L-glutamine-binding residues include serine 45, glycine 225, and glycine 227. Residues 177 to 361 (EIVVIDCGVK…DEFLAMCREH (185 aa)) enclose the Glutamine amidotransferase type-1 domain. The Nucleophile role is filled by cysteine 252. Residues leucine 253, glutamine 256, asparagine 294, glycine 296, and phenylalanine 297 each contribute to the L-glutamine site. Catalysis depends on residues histidine 337 and glutamate 339.

It belongs to the CarA family. In terms of assembly, composed of two chains; the small (or glutamine) chain promotes the hydrolysis of glutamine to ammonia, which is used by the large (or ammonia) chain to synthesize carbamoyl phosphate. Tetramer of heterodimers (alpha,beta)4.

The catalysed reaction is hydrogencarbonate + L-glutamine + 2 ATP + H2O = carbamoyl phosphate + L-glutamate + 2 ADP + phosphate + 2 H(+). It catalyses the reaction L-glutamine + H2O = L-glutamate + NH4(+). It participates in amino-acid biosynthesis; L-arginine biosynthesis; carbamoyl phosphate from bicarbonate: step 1/1. Its pathway is pyrimidine metabolism; UMP biosynthesis via de novo pathway; (S)-dihydroorotate from bicarbonate: step 1/3. Functionally, small subunit of the glutamine-dependent carbamoyl phosphate synthetase (CPSase). CPSase catalyzes the formation of carbamoyl phosphate from the ammonia moiety of glutamine, carbonate, and phosphate donated by ATP, constituting the first step of 2 biosynthetic pathways, one leading to arginine and/or urea and the other to pyrimidine nucleotides. The small subunit (glutamine amidotransferase) binds and cleaves glutamine to supply the large subunit with the substrate ammonia. The sequence is that of Carbamoyl phosphate synthase small chain from Methanopyrus kandleri (strain AV19 / DSM 6324 / JCM 9639 / NBRC 100938).